We begin with the raw amino-acid sequence, 374 residues long: Queuine tRNA-ribosyltransferase (374 aa).

The active-site Proton acceptor is aspartate 89. Residues 89–93 (DSGGF), aspartate 143, glutamine 187, and glycine 214 each bind substrate. Residues 245-251 (GVGKPED) form an RNA binding region. The Nucleophile role is filled by aspartate 264. Residues 269 to 273 (TRNAR) are RNA binding; important for wobble base 34 recognition. Zn(2+) contacts are provided by cysteine 302, cysteine 304, cysteine 307, and histidine 333.

This sequence belongs to the queuine tRNA-ribosyltransferase family. Homodimer. Within each dimer, one monomer is responsible for RNA recognition and catalysis, while the other monomer binds to the replacement base PreQ1. The cofactor is Zn(2+).

It catalyses the reaction 7-aminomethyl-7-carbaguanine + guanosine(34) in tRNA = 7-aminomethyl-7-carbaguanosine(34) in tRNA + guanine. Its pathway is tRNA modification; tRNA-queuosine biosynthesis. Its function is as follows. Catalyzes the base-exchange of a guanine (G) residue with the queuine precursor 7-aminomethyl-7-deazaguanine (PreQ1) at position 34 (anticodon wobble position) in tRNAs with GU(N) anticodons (tRNA-Asp, -Asn, -His and -Tyr). Catalysis occurs through a double-displacement mechanism. The nucleophile active site attacks the C1' of nucleotide 34 to detach the guanine base from the RNA, forming a covalent enzyme-RNA intermediate. The proton acceptor active site deprotonates the incoming PreQ1, allowing a nucleophilic attack on the C1' of the ribose to form the product. After dissociation, two additional enzymatic reactions on the tRNA convert PreQ1 to queuine (Q), resulting in the hypermodified nucleoside queuosine (7-(((4,5-cis-dihydroxy-2-cyclopenten-1-yl)amino)methyl)-7-deazaguanosine). In Yersinia pseudotuberculosis serotype O:1b (strain IP 31758), this protein is Queuine tRNA-ribosyltransferase.